A 191-amino-acid chain; its full sequence is Protein GrpE (191 aa).

Belongs to the GrpE family. Homodimer.

It localises to the cytoplasm. In terms of biological role, participates actively in the response to hyperosmotic and heat shock by preventing the aggregation of stress-denatured proteins, in association with DnaK and GrpE. It is the nucleotide exchange factor for DnaK and may function as a thermosensor. Unfolded proteins bind initially to DnaJ; upon interaction with the DnaJ-bound protein, DnaK hydrolyzes its bound ATP, resulting in the formation of a stable complex. GrpE releases ADP from DnaK; ATP binding to DnaK triggers the release of the substrate protein, thus completing the reaction cycle. Several rounds of ATP-dependent interactions between DnaJ, DnaK and GrpE are required for fully efficient folding. This Listeria monocytogenes serotype 4b (strain CLIP80459) protein is Protein GrpE.